We begin with the raw amino-acid sequence, 619 residues long: Serine/threonine-protein kinase pkn1 (619 aa).

Positions Tyr15–Leu302 constitute a Protein kinase domain. Residue Lys21–Asp29 participates in ATP binding. Glu141 serves as the catalytic Proton acceptor.

This sequence belongs to the protein kinase superfamily. Ser/Thr protein kinase family. Post-translationally, autophosphorylated on serine and threonine residues.

It catalyses the reaction L-seryl-[protein] + ATP = O-phospho-L-seryl-[protein] + ADP + H(+). It carries out the reaction L-threonyl-[protein] + ATP = O-phospho-L-threonyl-[protein] + ADP + H(+). In terms of biological role, together with the serine/threonine kinase PknD, may play a role in the specific interactions with host proteins during intracellular growth. The polypeptide is Serine/threonine-protein kinase pkn1 (pkn1) (Chlamydia pneumoniae (Chlamydophila pneumoniae)).